The sequence spans 429 residues: Endo-1,4-beta-xylanase 1 (429 aa).

The first 19 residues, 1–19 (MQTKSILTAALLAAAPASA), serve as a signal peptide directing secretion. Positions 43–336 (NSDQQYNRIL…KPAWTSISSV (294 aa)) constitute a GH10 domain. Glu150 serves as the catalytic Proton donor. Glu257 acts as the Nucleophile in catalysis. Cysteines 286 and 292 form a disulfide. The tract at residues 364-395 (TTPPPISSPIVPSTTTTSAVPTTTVSPPEPEQ) is disordered. The segment covering 371–389 (SPIVPSTTTTSAVPTTTVS) has biased composition (low complexity). A CBM1 domain is found at 393-429 (PEQTRWGQCGGIGWNGPTKCQSPWTCTRLNDWYFQCL).

Belongs to the glycosyl hydrolase 10 (cellulase F) family.

It is found in the secreted. The catalysed reaction is Endohydrolysis of (1-&gt;4)-beta-D-xylosidic linkages in xylans.. It participates in glycan degradation; xylan degradation. Endo-1,4-beta-xylanase involved in the hydrolysis of xylan, a major structural heterogeneous polysaccharide found in plant biomass representing the second most abundant polysaccharide in the biosphere, after cellulose. This is Endo-1,4-beta-xylanase 1 from Humicola insolens (Soft-rot fungus).